Here is a 289-residue protein sequence, read N- to C-terminus: Ribosomal RNA small subunit methyltransferase H (289 aa).

S-adenosyl-L-methionine-binding positions include 40 to 42 (GGH), Asp-60, Phe-84, Asp-106, and Gln-113.

It belongs to the methyltransferase superfamily. RsmH family.

Its subcellular location is the cytoplasm. The catalysed reaction is cytidine(1402) in 16S rRNA + S-adenosyl-L-methionine = N(4)-methylcytidine(1402) in 16S rRNA + S-adenosyl-L-homocysteine + H(+). Specifically methylates the N4 position of cytidine in position 1402 (C1402) of 16S rRNA. The sequence is that of Ribosomal RNA small subunit methyltransferase H from Haemophilus influenzae (strain PittGG).